A 165-amino-acid polypeptide reads, in one-letter code: 2-C-methyl-D-erythritol 2,4-cyclodiphosphate synthase (165 aa).

A divalent metal cation-binding residues include D13 and H15. 4-CDP-2-C-methyl-D-erythritol 2-phosphate is bound by residues 13-15 (DRH) and 39-40 (HS). A divalent metal cation is bound at residue H47. Residues 61–63 (DIG) and F141 contribute to the 4-CDP-2-C-methyl-D-erythritol 2-phosphate site.

The protein belongs to the IspF family. In terms of assembly, homotrimer. It depends on a divalent metal cation as a cofactor.

It carries out the reaction 4-CDP-2-C-methyl-D-erythritol 2-phosphate = 2-C-methyl-D-erythritol 2,4-cyclic diphosphate + CMP. Its pathway is isoprenoid biosynthesis; isopentenyl diphosphate biosynthesis via DXP pathway; isopentenyl diphosphate from 1-deoxy-D-xylulose 5-phosphate: step 4/6. Its function is as follows. Involved in the biosynthesis of isopentenyl diphosphate (IPP) and dimethylallyl diphosphate (DMAPP), two major building blocks of isoprenoid compounds. Catalyzes the conversion of 4-diphosphocytidyl-2-C-methyl-D-erythritol 2-phosphate (CDP-ME2P) to 2-C-methyl-D-erythritol 2,4-cyclodiphosphate (ME-CPP) with a corresponding release of cytidine 5-monophosphate (CMP). The chain is 2-C-methyl-D-erythritol 2,4-cyclodiphosphate synthase from Thermotoga neapolitana (strain ATCC 49049 / DSM 4359 / NBRC 107923 / NS-E).